We begin with the raw amino-acid sequence, 535 residues long: MAQTALISVSDKTGILEFAQALHALGIKLLSTGGTAKLLADAGLPVTEVADHTGFPEMLDGRVKTLHPKIHGGLLARRDLPAHVAAIQEHGIDTIDLLVVNLYPFEATVAKAGCTLEDAIENIDIGGPAMVRSAAKNWKDVGVLTDASQYAVALAELQAGGKLSDKTKFAFSVAAFNRIADYDGAISDYLSAIDFDASIGQASPTRSMFPAQSNGRFVKVQDLRYGENPHQQAAFYRDLHPAPGSLVSAKQLQGKELSYNNIADADAAWECVKSFDVPACVIVKHANPCGVAVGKDAAEAYGKAFKTDPTSAFGGIIAFNRPVDGETAQAIAKQFVEVLMAPGYTPEALAVFQATKVKQNVRVLEIALPPGGTTDWDNGRNLMDVKRVGSGLLMQTADNHELAASDLKVVTKKQPTPEQLQDLLFAWKVAKYVKSNAIVFCAGGMTMGVGAGQMSRLDSARIASIKAEHAGLSLKGTAVASDAFFPFRDGLDVVVDAGASCVIQPGGSMRDQEVIDAADERGVVMVLSGVRHFRH.

One can recognise an MGS-like domain in the interval 1–145 (MAQTALISVS…KNWKDVGVLT (145 aa)).

Belongs to the PurH family.

It carries out the reaction (6R)-10-formyltetrahydrofolate + 5-amino-1-(5-phospho-beta-D-ribosyl)imidazole-4-carboxamide = 5-formamido-1-(5-phospho-D-ribosyl)imidazole-4-carboxamide + (6S)-5,6,7,8-tetrahydrofolate. The catalysed reaction is IMP + H2O = 5-formamido-1-(5-phospho-D-ribosyl)imidazole-4-carboxamide. The protein operates within purine metabolism; IMP biosynthesis via de novo pathway; 5-formamido-1-(5-phospho-D-ribosyl)imidazole-4-carboxamide from 5-amino-1-(5-phospho-D-ribosyl)imidazole-4-carboxamide (10-formyl THF route): step 1/1. It functions in the pathway purine metabolism; IMP biosynthesis via de novo pathway; IMP from 5-formamido-1-(5-phospho-D-ribosyl)imidazole-4-carboxamide: step 1/1. This Variovorax paradoxus (strain S110) protein is Bifunctional purine biosynthesis protein PurH.